We begin with the raw amino-acid sequence, 297 residues long: MSNEIVKFSNQFNNVALKKFDAVHLDVLMAIASRVRERGTATVEFSFEELRGLMRLKQNLTNKQLADKIVQTNARLLALNYMFEDSGKIIQFALFTVFETDPANQTLEVSVNERFAFLLNDLTSQFTRFELAEFADLKSKYAKEFYRRAKQYRSSGIWKVSRDEFCRLLNVSKSTSDSVSNLNRVVLKPIVEECGPLLGLKIERQYAKRRLSGFVFTFARETPPVIDARPVKAKEEQDSGHWTSVAGYGEVFTTTELFDVTAARDHFDGTVDAGECRYCRYDARNRERHARNAGTLF.

This sequence belongs to the initiator RepB protein family.

This is Probable replication protein rep (rep) from Bifidobacterium longum (strain NCC 2705).